The following is a 225-amino-acid chain: Imidazole glycerol phosphate synthase subunit HisH (225 aa).

In terms of domain architecture, Glutamine amidotransferase type-1 spans 3 to 225; it reads TIAIVDYGMG…LYRNFVDWQP (223 aa). The active-site Nucleophile is C82. Catalysis depends on residues H205 and E207.

As to quaternary structure, heterodimer of HisH and HisF.

It localises to the cytoplasm. The catalysed reaction is 5-[(5-phospho-1-deoxy-D-ribulos-1-ylimino)methylamino]-1-(5-phospho-beta-D-ribosyl)imidazole-4-carboxamide + L-glutamine = D-erythro-1-(imidazol-4-yl)glycerol 3-phosphate + 5-amino-1-(5-phospho-beta-D-ribosyl)imidazole-4-carboxamide + L-glutamate + H(+). It catalyses the reaction L-glutamine + H2O = L-glutamate + NH4(+). The protein operates within amino-acid biosynthesis; L-histidine biosynthesis; L-histidine from 5-phospho-alpha-D-ribose 1-diphosphate: step 5/9. In terms of biological role, IGPS catalyzes the conversion of PRFAR and glutamine to IGP, AICAR and glutamate. The HisH subunit catalyzes the hydrolysis of glutamine to glutamate and ammonia as part of the synthesis of IGP and AICAR. The resulting ammonia molecule is channeled to the active site of HisF. The polypeptide is Imidazole glycerol phosphate synthase subunit HisH (Bordetella bronchiseptica (strain ATCC BAA-588 / NCTC 13252 / RB50) (Alcaligenes bronchisepticus)).